The following is a 91-amino-acid chain: Small ribosomal subunit protein bS16 (91 aa).

It belongs to the bacterial ribosomal protein bS16 family.

In Streptococcus mutans serotype c (strain ATCC 700610 / UA159), this protein is Small ribosomal subunit protein bS16.